A 736-amino-acid polypeptide reads, in one-letter code: Phosphoribosylformylglycinamidine synthase subunit PurL (736 aa).

Histidine 50 is an active-site residue. ATP is bound by residues tyrosine 53 and lysine 92. Glutamate 94 contributes to the Mg(2+) binding site. Residues 95–98 (SHNH) and arginine 117 contribute to the substrate site. Histidine 96 (proton acceptor) is an active-site residue. Aspartate 118 contributes to the Mg(2+) binding site. Residue glutamine 241 participates in substrate binding. Mg(2+) is bound at residue aspartate 269. Position 313–315 (313–315 (ESQ)) interacts with substrate. Residues aspartate 495 and glycine 532 each coordinate ATP. Asparagine 533 contacts Mg(2+). Serine 535 is a substrate binding site.

This sequence belongs to the FGAMS family. In terms of assembly, monomer. Part of the FGAM synthase complex composed of 1 PurL, 1 PurQ and 2 PurS subunits.

Its subcellular location is the cytoplasm. It carries out the reaction N(2)-formyl-N(1)-(5-phospho-beta-D-ribosyl)glycinamide + L-glutamine + ATP + H2O = 2-formamido-N(1)-(5-O-phospho-beta-D-ribosyl)acetamidine + L-glutamate + ADP + phosphate + H(+). It functions in the pathway purine metabolism; IMP biosynthesis via de novo pathway; 5-amino-1-(5-phospho-D-ribosyl)imidazole from N(2)-formyl-N(1)-(5-phospho-D-ribosyl)glycinamide: step 1/2. Functionally, part of the phosphoribosylformylglycinamidine synthase complex involved in the purines biosynthetic pathway. Catalyzes the ATP-dependent conversion of formylglycinamide ribonucleotide (FGAR) and glutamine to yield formylglycinamidine ribonucleotide (FGAM) and glutamate. The FGAM synthase complex is composed of three subunits. PurQ produces an ammonia molecule by converting glutamine to glutamate. PurL transfers the ammonia molecule to FGAR to form FGAM in an ATP-dependent manner. PurS interacts with PurQ and PurL and is thought to assist in the transfer of the ammonia molecule from PurQ to PurL. The chain is Phosphoribosylformylglycinamidine synthase subunit PurL from Bartonella tribocorum (strain CIP 105476 / IBS 506).